The following is a 283-amino-acid chain: 2-dehydro-3-deoxyphosphooctonate aldolase (283 aa).

This sequence belongs to the KdsA family.

The protein localises to the cytoplasm. The enzyme catalyses D-arabinose 5-phosphate + phosphoenolpyruvate + H2O = 3-deoxy-alpha-D-manno-2-octulosonate-8-phosphate + phosphate. It functions in the pathway carbohydrate biosynthesis; 3-deoxy-D-manno-octulosonate biosynthesis; 3-deoxy-D-manno-octulosonate from D-ribulose 5-phosphate: step 2/3. It participates in bacterial outer membrane biogenesis; lipopolysaccharide biosynthesis. The chain is 2-dehydro-3-deoxyphosphooctonate aldolase from Prochlorococcus marinus (strain MIT 9313).